A 118-amino-acid polypeptide reads, in one-letter code: HTH-type transcriptional regulator CmtR (118 aa).

The 95-residue stretch at 3-97 (TCEMRESALA…ELVQVVLAVD (95 aa)) folds into the HTH arsR-type domain. Positions 57, 61, and 102 each coordinate Cd(2+).

As to quaternary structure, homodimer.

Its function is as follows. Metal-responsive transcriptional repressor for the cmt operon. Binding of cadmium or lead causes the repressor to dissociate from the DNA. The sequence is that of HTH-type transcriptional regulator CmtR (cmtR) from Mycobacterium bovis (strain ATCC BAA-935 / AF2122/97).